Consider the following 201-residue polypeptide: Recombination protein RecR (201 aa).

A C4-type zinc finger spans residues 57 to 72; the sequence is CKYCANFTNKDECDIC. One can recognise a Toprim domain in the interval 80 to 176; that stretch reads TKLMIVTTNE…QIYRIGFGIP (97 aa).

Belongs to the RecR family.

Its function is as follows. May play a role in DNA repair. It seems to be involved in an RecBC-independent recombinational process of DNA repair. It may act with RecF and RecO. This is Recombination protein RecR from Ureaplasma parvum serovar 3 (strain ATCC 27815 / 27 / NCTC 11736).